Consider the following 72-residue polypeptide: Translation initiation factor IF-1 (72 aa).

Residues 1–72 (MSKTDVVEIE…TKGRIIWRDK (72 aa)) enclose the S1-like domain.

Belongs to the IF-1 family. As to quaternary structure, component of the 30S ribosomal translation pre-initiation complex which assembles on the 30S ribosome in the order IF-2 and IF-3, IF-1 and N-formylmethionyl-tRNA(fMet); mRNA recruitment can occur at any time during PIC assembly.

It is found in the cytoplasm. Functionally, one of the essential components for the initiation of protein synthesis. Stabilizes the binding of IF-2 and IF-3 on the 30S subunit to which N-formylmethionyl-tRNA(fMet) subsequently binds. Helps modulate mRNA selection, yielding the 30S pre-initiation complex (PIC). Upon addition of the 50S ribosomal subunit IF-1, IF-2 and IF-3 are released leaving the mature 70S translation initiation complex. This is Translation initiation factor IF-1 from Lachnoclostridium phytofermentans (strain ATCC 700394 / DSM 18823 / ISDg) (Clostridium phytofermentans).